The primary structure comprises 104 residues: Glutaredoxin 1 (104 aa).

The 96-residue stretch at 1-96 (MNKSILHTII…KLLETQPKNK (96 aa)) folds into the Glutaredoxin domain. Cysteine 17 and cysteine 20 form a disulfide bridge.

This sequence belongs to the glutaredoxin family. As to quaternary structure, monomer.

The protein resides in the cytoplasm. In terms of biological role, has a glutathione-disulfide oxidoreductase activity in the presence of NADPH and glutathione reductase. Reduces low molecular weight disulfides and proteins. The chain is Glutaredoxin 1 (grxC1) from Rickettsia typhi (strain ATCC VR-144 / Wilmington).